We begin with the raw amino-acid sequence, 210 residues long: Na(+)-translocating NADH-quinone reductase subunit D (210 aa).

6 helical membrane-spanning segments follow: residues 14–34 (PIVN…ALAV), 42–62 (LVMA…ISMI), 72–92 (IIVQ…LLQA), 103–123 (VFVG…AYAM), 131–151 (FMDG…VGFV), and 178–198 (NGLL…IWII).

It belongs to the NqrDE/RnfAE family. Composed of six subunits; NqrA, NqrB, NqrC, NqrD, NqrE and NqrF.

It localises to the cell inner membrane. The catalysed reaction is a ubiquinone + n Na(+)(in) + NADH + H(+) = a ubiquinol + n Na(+)(out) + NAD(+). In terms of biological role, NQR complex catalyzes the reduction of ubiquinone-1 to ubiquinol by two successive reactions, coupled with the transport of Na(+) ions from the cytoplasm to the periplasm. NqrA to NqrE are probably involved in the second step, the conversion of ubisemiquinone to ubiquinol. The protein is Na(+)-translocating NADH-quinone reductase subunit D of Shewanella sp. (strain ANA-3).